Consider the following 292-residue polypeptide: Nitrogenase iron protein 2 (292 aa).

G8–S15 provides a ligand contact to ATP. C106 is a binding site for [4Fe-4S] cluster. The residue at position 109 (R109) is an ADP-ribosylarginine; by dinitrogenase reductase ADP-ribosyltransferase. Residue C142 coordinates [4Fe-4S] cluster.

It belongs to the NifH/BchL/ChlL family. As to quaternary structure, homodimer. The cofactor is [4Fe-4S] cluster. The reversible ADP-ribosylation of Arg-109 inactivates the nitrogenase reductase and regulates nitrogenase activity.

The catalysed reaction is N2 + 8 reduced [2Fe-2S]-[ferredoxin] + 16 ATP + 16 H2O = H2 + 8 oxidized [2Fe-2S]-[ferredoxin] + 2 NH4(+) + 16 ADP + 16 phosphate + 6 H(+). The key enzymatic reactions in nitrogen fixation are catalyzed by the nitrogenase complex, which has 2 components: the iron protein and the molybdenum-iron protein. In Methanothermococcus thermolithotrophicus (Methanococcus thermolithotrophicus), this protein is Nitrogenase iron protein 2 (nifH2).